We begin with the raw amino-acid sequence, 349 residues long: NADH-quinone oxidoreductase subunit H (349 aa).

8 helical membrane-spanning segments follow: residues 19–39 (VWTLTKIVAIIAPLMLCVAYL), 88–108 (GLFILGPILAIAPSLAAWAVV), 123–143 (LLFLLAITSVEVYGVIIAGWA), 161–181 (VSYEVAMGFALICVLLISASL), 202–222 (FLSWNWIPLFPMFIVFLISGI), 249–269 (GMAFALFFLAEYANMILVSIL), 284–304 (FLPDGFFWLALKTAFFLFVFL), and 325–345 (VFIPITLVWVIVVAVWMMSPL).

It belongs to the complex I subunit 1 family. NDH-1 is composed of 14 different subunits. Subunits NuoA, H, J, K, L, M, N constitute the membrane sector of the complex.

The protein localises to the cell inner membrane. The catalysed reaction is a quinone + NADH + 5 H(+)(in) = a quinol + NAD(+) + 4 H(+)(out). Functionally, NDH-1 shuttles electrons from NADH, via FMN and iron-sulfur (Fe-S) centers, to quinones in the respiratory chain. The immediate electron acceptor for the enzyme in this species is believed to be ubiquinone. Couples the redox reaction to proton translocation (for every two electrons transferred, four hydrogen ions are translocated across the cytoplasmic membrane), and thus conserves the redox energy in a proton gradient. This subunit may bind ubiquinone. The polypeptide is NADH-quinone oxidoreductase subunit H (Aromatoleum aromaticum (strain DSM 19018 / LMG 30748 / EbN1) (Azoarcus sp. (strain EbN1))).